The primary structure comprises 1914 residues: Fatty acid synthase beta subunit stcK (1914 aa).

The tract at residues 17-395 (LYACFGGQGP…LEGTGMNVVN (379 aa)) is acetyltransferase (AT) domain. Residues 446 to 692 (TRLLGTPHVM…LIVEAPGVKD (247 aa)) are enoyl reductase (ER) domain. Positions 1009–1509 (GECAWGYAAL…RANDRLRMEI (501 aa)) are dehydratase (DH) domain. The region spanning 1398 to 1532 (FLNRHGAPRV…VRVLKESTGE (135 aa)) is the MaoC-like domain. Residues 1548 to 1900 (YVFTGQGTQE…IRLVQGVTQS (353 aa)) form a malonyl/palmitoyl transferase (MT/PT) domain region.

The protein belongs to the fungal fatty acid synthetase subunit beta family. In terms of assembly, [Alpha(6)beta(6)] hexamers of two multifunctional subunits (alpha and beta).

It carries out the reaction acetyl-CoA + n malonyl-CoA + 2n NADPH + 4n H(+) = a long-chain-acyl-CoA + n CoA + n CO2 + 2n NADP(+).. It catalyses the reaction holo-[ACP] + acetyl-CoA = acetyl-[ACP] + CoA. The catalysed reaction is holo-[ACP] + malonyl-CoA = malonyl-[ACP] + CoA. The enzyme catalyses a (3R)-hydroxyacyl-[ACP] = a (2E)-enoyl-[ACP] + H2O. It carries out the reaction a 2,3-saturated acyl-[ACP] + NAD(+) = a (2E)-enoyl-[ACP] + NADH + H(+). It catalyses the reaction (9Z)-octadecenoyl-[ACP] + H2O = (9Z)-octadecenoate + holo-[ACP] + H(+). Its pathway is mycotoxin biosynthesis; sterigmatocystin biosynthesis. In terms of biological role, fatty acid synthase beta subunit; part of the gene cluster that mediates the biosynthesis of sterigmatocystin (ST), a polyketide-derived furanocoumarin which is part of the most toxic and carcinogenic compounds among the known mycotoxins. The first step in the biosynthesis of sterigmatocystin is the production of hexanoate by the fatty acid synthase (FAS) units stcJ and stcK. The polyketide backbone is assembled by the non-reducing polyketide synthase stcA by condensation of the starter hexanoyl-CoA and 7 malonyl-CoA extender units followed by cyclization and release of norsolorinic acid. Norsolorinic acid is the first stable intermediate in the biosynthesis of sterigmatocystin and is converted into averantin (AVN) by the ketoreductase stcE which reduces the hexanoate ketone to an alcohol. Averantin is then oxidized into 5'-hydroxyaverantin (HAVN) by the cytochrome P450 monooxygenase stcF. 5'-hydroxyaverantin is further converted to 5'-oxyaverantin (OAVN) by the 5'-hydroxyaverantin dehydrogenase stcG. The next step is the conversion of OAVN into averufin (AVF) which is catalyzed by a yet to be identified enzyme. The cytochrome P450 monooxygenase stcB and the flavin-binding monooxygenase stcW are both required for the conversion of averufin to 1-hydroxyversicolorone. The esterase stcI probably catalyzes the formation of versiconal hemiacetal acetate from 1-hydroxyversicolorone. The oxydoreductase stcN then probably catalyzes the biosynthetic step from versiconal to versicolorin B (VERB). The next step is performed by the versicolorin B desaturase stcL to produce versicolorin A (VERA). The ketoreductase stcU and the cytochrome P450 monooxygenase stcS are involved in the conversion of versicolorin A to demethylsterigmatocystin. The Baeyer-Villiger oxidas stcQ and the reductase stcR might be involved in the biosynthetic step from versicolorin A to demethylsterigmatocystin. The final step in the biosynthesis of sterigmatocystin is the methylation of demethylsterigmatocystin catalyzed by the methyltransferase stcP. The polypeptide is Fatty acid synthase beta subunit stcK (Emericella nidulans (strain FGSC A4 / ATCC 38163 / CBS 112.46 / NRRL 194 / M139) (Aspergillus nidulans)).